The primary structure comprises 128 residues: Sulfurtransferase TusD (128 aa).

Cysteine 78 acts as the Cysteine persulfide intermediate in catalysis.

The protein belongs to the DsrE/TusD family. In terms of assembly, heterohexamer, formed by a dimer of trimers. The hexameric TusBCD complex contains 2 copies each of TusB, TusC and TusD. The TusBCD complex interacts with TusE.

The protein resides in the cytoplasm. Functionally, part of a sulfur-relay system required for 2-thiolation of 5-methylaminomethyl-2-thiouridine (mnm(5)s(2)U) at tRNA wobble positions. Accepts sulfur from TusA and transfers it in turn to TusE. The chain is Sulfurtransferase TusD from Shigella flexneri serotype 5b (strain 8401).